A 469-amino-acid polypeptide reads, in one-letter code: Ribulose bisphosphate carboxylase large chain (469 aa).

Positions 1-2 (MS) are excised as a propeptide. Pro-3 bears the N-acetylproline mark. Lys-14 carries the N6,N6,N6-trimethyllysine modification. Residues Asn-123 and Thr-173 each contribute to the substrate site. Lys-175 acts as the Proton acceptor in catalysis. Lys-177 serves as a coordination point for substrate. Mg(2+) is bound by residues Lys-201, Asp-203, and Glu-204. Position 201 is an N6-carboxylysine (Lys-201). The active-site Proton acceptor is the His-294. Positions 295, 327, and 379 each coordinate substrate.

It belongs to the RuBisCO large chain family. Type I subfamily. As to quaternary structure, heterohexadecamer of 8 large chains and 8 small chains; disulfide-linked. The disulfide link is formed within the large subunit homodimers. Mg(2+) serves as cofactor. The disulfide bond which can form in the large chain dimeric partners within the hexadecamer appears to be associated with oxidative stress and protein turnover.

It localises to the plastid. The protein resides in the chloroplast. The catalysed reaction is 2 (2R)-3-phosphoglycerate + 2 H(+) = D-ribulose 1,5-bisphosphate + CO2 + H2O. The enzyme catalyses D-ribulose 1,5-bisphosphate + O2 = 2-phosphoglycolate + (2R)-3-phosphoglycerate + 2 H(+). Functionally, ruBisCO catalyzes two reactions: the carboxylation of D-ribulose 1,5-bisphosphate, the primary event in carbon dioxide fixation, as well as the oxidative fragmentation of the pentose substrate in the photorespiration process. Both reactions occur simultaneously and in competition at the same active site. The chain is Ribulose bisphosphate carboxylase large chain from Atriplex patula (Common orache).